Consider the following 129-residue polypeptide: uncharacterized protein (129 aa).

2 C2H2-type zinc fingers span residues 75–99 (FVCP…YTEH) and 101–124 (KVCP…CKKH).

In terms of biological role, essential for virus function. This is an uncharacterized protein from Saccharolobus solfataricus (Sulfolobus solfataricus).